We begin with the raw amino-acid sequence, 267 residues long: Membrane-spanning 4-domains subfamily A member 12 (267 aa).

The Cytoplasmic portion of the chain corresponds to 1–91 (MMSSKPTSHA…MNFKEEAKAL (91 aa)). Residues 92–112 (GVIQIMVGLMHIGFGIVLCLI) form a helical membrane-spanning segment. Over 113–120 (SFSFREVL) the chain is Extracellular. A helical membrane pass occupies residues 121–141 (GFASTAVIGGYPFWGGLSFII). Residues 142–160 (SGSLSVSASKELSRCLVKG) lie on the Cytoplasmic side of the membrane. Residues 161-181 (SLGMNIVSSILAFIGVILLLV) form a helical membrane-spanning segment. Residues 182-200 (DMCINGVAGQDYWAVLSGK) are Extracellular-facing. A helical membrane pass occupies residues 201–221 (GISATLMIFSLLEFFVACATA). Over 222–267 (HFANQANTTTNMSVLVIPNMYESNPVTPASSSAPPRCNNYSANAPK) the chain is Cytoplasmic. The segment at 248 to 267 (TPASSSAPPRCNNYSANAPK) is disordered.

Belongs to the MS4A family.

The protein localises to the membrane. May be involved in signal transduction as a component of a multimeric receptor complex. This chain is Membrane-spanning 4-domains subfamily A member 12 (MS4A12), found in Homo sapiens (Human).